A 111-amino-acid chain; its full sequence is Large ribosomal subunit protein uL22 (111 aa).

Belongs to the universal ribosomal protein uL22 family. In terms of assembly, part of the 50S ribosomal subunit.

Functionally, this protein binds specifically to 23S rRNA; its binding is stimulated by other ribosomal proteins, e.g. L4, L17, and L20. It is important during the early stages of 50S assembly. It makes multiple contacts with different domains of the 23S rRNA in the assembled 50S subunit and ribosome. Its function is as follows. The globular domain of the protein is located near the polypeptide exit tunnel on the outside of the subunit, while an extended beta-hairpin is found that lines the wall of the exit tunnel in the center of the 70S ribosome. This chain is Large ribosomal subunit protein uL22, found in Acholeplasma laidlawii (strain PG-8A).